The sequence spans 474 residues: Iroquois-class homeodomain protein irx-5 (474 aa).

Positions 109–171 form a DNA-binding region, homeobox; TALE-type; the sequence is DPAYRKNASR…NARRRLKKEN (63 aa). 3 disordered regions span residues 174-222, 252-294, and 453-474; these read TWTP…SPDG, ERNG…IQQL, and SQSQ…MSSI. Positions 182-199 are enriched in acidic residues; it reads EDEDDDENIDLEKNEEDD. Pro residues predominate over residues 263 to 273; sequence PPTPPLCPPDQ.

It belongs to the TALE/IRO homeobox family. In terms of tissue distribution, early in gastrulation, expressed in cells beneath the blastopore lip. Subsequently expressed in the neural plate in overlapping patterns with other irx members, which all share an anterior border of expression. At the time of neural tube closure (stage 19) in regions of the midbrain, hindbrain, neural tube and optic vesicle, where expression continues during tailbud stages. In stage 34, expressed throughout the eye retina. Does not appear to be expressed in the developing heart or pronephros.

Its subcellular location is the nucleus. Its function is as follows. Acts partially redundantly with other irx members in neural patterning. Required for formation of the posterior forebrain, midbrain, hindbrain, and to a lesser extent, spinal cord. Patterns the neuroectoderm in both the anterior/posterior and dorsal/ventral axes. Does not appear to play a role in pronephros kidney development. Involved in craniofacial and gonadal development. Modulates the migration of progenitor cell populations in branchial arches and gonads by repressing CXCL12. In Xenopus laevis (African clawed frog), this protein is Iroquois-class homeodomain protein irx-5 (irx5).